The primary structure comprises 563 residues: DNA polymerase III subunit tau (563 aa).

45 to 52 provides a ligand contact to ATP; sequence GPRGTGKT. Zn(2+) contacts are provided by Cys-64, Cys-73, Cys-76, and Cys-79.

The protein belongs to the DnaX/STICHEL family. As to quaternary structure, component of the DNA clamp loading complex consisting of tau(3):delta(1):delta'(1). The DNA polymerase III holoenzyme complex contains at least 10 different subunits organized into 3 functionally essential subassemblies: the Pol III core, the beta sliding clamp processivity factor and the clamp-loading complex. The Pol III core (subunits alpha, epsilon and theta) contains the polymerase and the 3'-5' exonuclease proofreading activities. The polymerase is tethered to the template via the dimeric beta sliding clamp processivity factor. The DNA clamp-loading complex assembles the beta sliding clamp onto the primed template and plays a central role in the organization and communication at the replication fork. Forms a complex with replicative DNA helicase DnaB (shown with G.stearothermophilus DnaB) tau(3):DnaB(6); a single ATP hydrolysis even is sufficient for complex formation. Colocalizes with DNA helicases PriA, RecQ and RecS.

It is found in the cytoplasm. It localises to the nucleoid. The catalysed reaction is DNA(n) + a 2'-deoxyribonucleoside 5'-triphosphate = DNA(n+1) + diphosphate. Part of the beta sliding clamp loading complex, which hydrolyzes ATP to load the beta clamp onto primed DNA to form the DNA replication pre-initiation complex. DNA polymerase III is a complex, multichain enzyme responsible for most of the replicative DNA synthesis in bacteria. The polypeptide is DNA polymerase III subunit tau (Bacillus subtilis (strain 168)).